We begin with the raw amino-acid sequence, 183 residues long: CKLF-like MARVEL transmembrane domain-containing protein 6 (183 aa).

N-acetylmethionine is present on methionine 1. The interval 1–20 (MENGAVYSPTTEEDPGPARG) is disordered. The Cytoplasmic segment spans residues 1-39 (MENGAVYSPTTEEDPGPARGPRSGLAAYCFLGRLPLLRR). Serine 8 carries the post-translational modification Phosphoserine. Residues 33-160 (RLPLLRRVLK…DFVTMLYEKR (128 aa)) enclose the MARVEL domain. The chain crosses the membrane as a helical span at residues 40-60 (VLKGLQLSLSLLAFICEEVVS). Residues 61–67 (QCTLCGG) lie on the Extracellular side of the membrane. A helical membrane pass occupies residues 68–88 (LYFFEFVSCSAFLLSLLILIV). Over 89–106 (YCTPFYERVDTTKVKSSD) the chain is Cytoplasmic. Residues 107–127 (FYITLGTGCVFLLASIIFVST) form a helical membrane-spanning segment. Over 128–134 (HDRTSAE) the chain is Extracellular. The helical transmembrane segment at 135–155 (IAAIVFGFIASFMFLLDFVTM) threads the bilayer. Residues 156-183 (LYEKRQESQLRKSENTTRAEALTEPLNA) are Cytoplasmic-facing. At threonine 171 the chain carries Phosphothreonine.

The protein belongs to the chemokine-like factor family. Interacts with PD-L1/CD274 (via transmembrane domain); the interaction is direct. Interacts with CMTM4. Interacts with CD58, ARG1, ENO1 and TMPO.

It is found in the cell membrane. Its subcellular location is the early endosome membrane. The protein resides in the recycling endosome membrane. In terms of biological role, master regulator of recycling and plasma membrane expression of PD-L1/CD274, an immune inhibitory ligand critical for immune tolerance to self and antitumor immunity. Associates with both constitutive and IFNG-induced PD-L1/CD274 at recycling endosomes, where it protects PD-L1/CD274 from being targeted for lysosomal degradation, likely by preventing its ubiquitination. May stabilize PD-L1/CD274 expression on antigen presenting cells and potentiates inhibitory signaling by PDCD1/CD279, its receptor on T-cells, ultimately triggering T-cell anergy. This Pongo abelii (Sumatran orangutan) protein is CKLF-like MARVEL transmembrane domain-containing protein 6 (CMTM6).